A 462-amino-acid chain; its full sequence is tRNA(Ile)-lysidine synthase (462 aa).

ATP is bound at residue 31 to 36 (SGGRDS).

The protein belongs to the tRNA(Ile)-lysidine synthase family.

The protein resides in the cytoplasm. The enzyme catalyses cytidine(34) in tRNA(Ile2) + L-lysine + ATP = lysidine(34) in tRNA(Ile2) + AMP + diphosphate + H(+). Ligates lysine onto the cytidine present at position 34 of the AUA codon-specific tRNA(Ile) that contains the anticodon CAU, in an ATP-dependent manner. Cytidine is converted to lysidine, thus changing the amino acid specificity of the tRNA from methionine to isoleucine. This is tRNA(Ile)-lysidine synthase from Ralstonia nicotianae (strain ATCC BAA-1114 / GMI1000) (Ralstonia solanacearum).